Here is a 79-residue protein sequence, read N- to C-terminus: Large ribosomal subunit protein bL31 (79 aa).

This sequence belongs to the bacterial ribosomal protein bL31 family. Type A subfamily. As to quaternary structure, part of the 50S ribosomal subunit.

In terms of biological role, binds the 23S rRNA. In Trichormus variabilis (strain ATCC 29413 / PCC 7937) (Anabaena variabilis), this protein is Large ribosomal subunit protein bL31.